The primary structure comprises 409 residues: Nucleoprotein (409 aa).

Disordered stretches follow at residues 1-32 (MASG…SSGN), 46-68 (IPPP…SQQH), 164-196 (RSGR…EDDL), and 238-258 (VDQV…DDKM). Residues 15 to 31 (PVIKLGGPKPPKVGSSG) show a composition bias toward low complexity. Positions 29–160 (SSGNASWFQA…GNFRWDFIPL (132 aa)) are RNA-binding. Residues 31 to 156 (GNASWFQAIK…GGPDGNFRWD (126 aa)) form the CoV N NTD domain. The span at 166-179 (GRSTAASSAASSRA) shows a compositional bias: low complexity. Basic and acidic residues-rich tracts occupy residues 180–192 (PSRE…RSGS) and 247–258 (KGKEGNFGDDKM). Phosphoserine; by host is present on residues S190 and S192. The 117-residue stretch at 215–331 (TKAKADEMAH…QCVDGVGTRP (117 aa)) folds into the CoV N CTD domain. A dimerization region spans residues 226 to 333 (RYCKRTIPPN…VDGVGTRPKD (108 aa)). Cysteines 320 and 323 form a disulfide. The disordered stretch occupies residues 326–409 (GVGTRPKDDE…GDAALGENEL (84 aa)). A compositionally biased stretch (basic residues) spans 358-367 (QRPKKEKKPK). Over residues 368 to 384 (KHDDEVDKALTSDEERN) the composition is skewed to basic and acidic residues. Position 378 is a phosphothreonine; by host (T378). The residue at position 379 (S379) is a Phosphoserine; by host.

The protein belongs to the gammacoronavirus nucleocapsid protein family. As to quaternary structure, homooligomer. Both monomeric and oligomeric forms interact with RNA. Interacts with protein M. Interacts with NSP3; this interaction serves to tether the genome to the newly translated replicase-transcriptase complex at a very early stage of infection. Post-translationally, ADP-ribosylated. The ADP-ribosylation is retained in the virion during infection. In terms of processing, phosphorylated on serine and threonine residues.

Its subcellular location is the virion. It is found in the host endoplasmic reticulum-Golgi intermediate compartment. The protein resides in the host Golgi apparatus. Its function is as follows. Packages the positive strand viral genome RNA into a helical ribonucleocapsid (RNP) and plays a fundamental role during virion assembly through its interactions with the viral genome and membrane protein M. Plays an important role in enhancing the efficiency of subgenomic viral RNA transcription as well as viral replication. This Avian infectious bronchitis virus (strain M41) (IBV) protein is Nucleoprotein.